The primary structure comprises 443 residues: ATP-dependent protease ATPase subunit HslU (443 aa).

ATP-binding positions include isoleucine 18, 60-65 (GVGKTE), aspartate 256, glutamate 321, and arginine 393.

Belongs to the ClpX chaperone family. HslU subfamily. As to quaternary structure, a double ring-shaped homohexamer of HslV is capped on each side by a ring-shaped HslU homohexamer. The assembly of the HslU/HslV complex is dependent on binding of ATP.

The protein localises to the cytoplasm. In terms of biological role, ATPase subunit of a proteasome-like degradation complex; this subunit has chaperone activity. The binding of ATP and its subsequent hydrolysis by HslU are essential for unfolding of protein substrates subsequently hydrolyzed by HslV. HslU recognizes the N-terminal part of its protein substrates and unfolds these before they are guided to HslV for hydrolysis. This chain is ATP-dependent protease ATPase subunit HslU, found in Yersinia pestis bv. Antiqua (strain Antiqua).